A 343-amino-acid chain; its full sequence is Aspartate beta-hydroxylase domain-containing protein 2 (343 aa).

Residues 1 to 31 lie on the Cytoplasmic side of the membrane; the sequence is MWLEWLVAWSWSLDGLRDCIATGIQSVRDCD. A helical membrane pass occupies residues 32–52; the sequence is GTAVITVACLLVLFVWYCYHV. The Lumenal portion of the chain corresponds to 53–343; it reads GREQPRPHVS…ALDFIFAPGR (291 aa). Residues Asn-77 and Asn-185 are each glycosylated (N-linked (GlcNAc...) asparagine). 2 residues coordinate 2-oxoglutarate: Trp-202 and Ser-246. Fe cation is bound at residue His-257. A 2-oxoglutarate-binding site is contributed by 266–268; the sequence is RCH. His-302 lines the Fe cation pocket. Position 315 (Arg-315) interacts with 2-oxoglutarate.

Belongs to the aspartyl/asparaginyl beta-hydroxylase family. Requires Fe cation as cofactor.

It is found in the membrane. In terms of biological role, may function as 2-oxoglutarate-dependent dioxygenase. The sequence is that of Aspartate beta-hydroxylase domain-containing protein 2 (Asphd2) from Rattus norvegicus (Rat).